A 78-amino-acid polypeptide reads, in one-letter code: Acyl carrier protein (78 aa).

The Carrier domain occupies 2–77; the sequence is SDIEQRVKQA…SAIDYVTKKL (76 aa). S37 carries the post-translational modification O-(pantetheine 4'-phosphoryl)serine.

Belongs to the acyl carrier protein (ACP) family. In terms of processing, 4'-phosphopantetheine is transferred from CoA to a specific serine of apo-ACP by AcpS. This modification is essential for activity because fatty acids are bound in thioester linkage to the sulfhydryl of the prosthetic group.

It localises to the cytoplasm. Its pathway is lipid metabolism; fatty acid biosynthesis. Functionally, carrier of the growing fatty acid chain in fatty acid biosynthesis. The chain is Acyl carrier protein from Acinetobacter baumannii (strain AB307-0294).